Reading from the N-terminus, the 157-residue chain is SsrA-binding protein (157 aa).

A disordered region spans residues Leu-133–Gly-157. Residues Asp-135–Arg-151 are compositionally biased toward basic and acidic residues.

The protein belongs to the SmpB family.

It is found in the cytoplasm. Required for rescue of stalled ribosomes mediated by trans-translation. Binds to transfer-messenger RNA (tmRNA), required for stable association of tmRNA with ribosomes. tmRNA and SmpB together mimic tRNA shape, replacing the anticodon stem-loop with SmpB. tmRNA is encoded by the ssrA gene; the 2 termini fold to resemble tRNA(Ala) and it encodes a 'tag peptide', a short internal open reading frame. During trans-translation Ala-aminoacylated tmRNA acts like a tRNA, entering the A-site of stalled ribosomes, displacing the stalled mRNA. The ribosome then switches to translate the ORF on the tmRNA; the nascent peptide is terminated with the 'tag peptide' encoded by the tmRNA and targeted for degradation. The ribosome is freed to recommence translation, which seems to be the essential function of trans-translation. This is SsrA-binding protein from Bradyrhizobium sp. (strain ORS 278).